The following is a 208-amino-acid chain: dITP/XTP pyrophosphatase (208 aa).

16-21 (SNNKGK) contributes to the substrate binding site. Aspartate 79 serves as the catalytic Proton acceptor. Aspartate 79 is a binding site for Mg(2+). Substrate is bound by residues serine 80, 166 to 169 (FGYD), lysine 189, and 194 to 195 (HR).

It belongs to the HAM1 NTPase family. As to quaternary structure, homodimer. Mg(2+) is required as a cofactor.

It catalyses the reaction XTP + H2O = XMP + diphosphate + H(+). The enzyme catalyses dITP + H2O = dIMP + diphosphate + H(+). The catalysed reaction is ITP + H2O = IMP + diphosphate + H(+). Its function is as follows. Pyrophosphatase that catalyzes the hydrolysis of nucleoside triphosphates to their monophosphate derivatives, with a high preference for the non-canonical purine nucleotides XTP (xanthosine triphosphate), dITP (deoxyinosine triphosphate) and ITP. Seems to function as a house-cleaning enzyme that removes non-canonical purine nucleotides from the nucleotide pool, thus preventing their incorporation into DNA/RNA and avoiding chromosomal lesions. This Acinetobacter baumannii (strain AB307-0294) protein is dITP/XTP pyrophosphatase.